We begin with the raw amino-acid sequence, 353 residues long: sn-glycerol-3-phosphate import ATP-binding protein UgpC 3 (353 aa).

Residues 4–235 enclose the ABC transporter domain; sequence IALKDVRKVY…PATTFVATFI (232 aa). 37–44 is a binding site for ATP; sequence GPSGCGKS.

It belongs to the ABC transporter superfamily. sn-glycerol-3-phosphate importer (TC 3.A.1.1.3) family. In terms of assembly, the complex is composed of two ATP-binding proteins (UgpC), two transmembrane proteins (UgpA and UgpE) and a solute-binding protein (UgpB).

Its subcellular location is the cell inner membrane. The enzyme catalyses sn-glycerol 3-phosphate(out) + ATP + H2O = sn-glycerol 3-phosphate(in) + ADP + phosphate + H(+). Functionally, part of the ABC transporter complex UgpBAEC involved in sn-glycerol-3-phosphate (G3P) import. Responsible for energy coupling to the transport system. This chain is sn-glycerol-3-phosphate import ATP-binding protein UgpC 3, found in Agrobacterium fabrum (strain C58 / ATCC 33970) (Agrobacterium tumefaciens (strain C58)).